The sequence spans 132 residues: Small ribosomal subunit protein uS9 (132 aa).

Positions 103 to 132 (NGLLTRDDRTKERKKPGLKRARKAPQYTKR) are disordered. The span at 114–132 (ERKKPGLKRARKAPQYTKR) shows a compositional bias: basic residues.

The protein belongs to the universal ribosomal protein uS9 family.

The protein is Small ribosomal subunit protein uS9 of Dehalococcoides mccartyi (strain CBDB1).